The chain runs to 341 residues: Ribonucleoside-diphosphate reductase small chain A (341 aa).

Residues 1-20 (MGSLKEGQGRDMEEGESEEP) are disordered. The Fe cation site is built by Asp87, Glu118, and His121. Residue Tyr125 is part of the active site. Fe cation-binding residues include Glu180, Glu214, and His217.

It belongs to the ribonucleoside diphosphate reductase small chain family. As to quaternary structure, homodimer and heterodimer with TSO2. Heterotetramer of two R1 and two R2 chains. A radical transfer pathway may occur between Tyr-125 of protein R2 and R1. Homodimer contains a dinuclear non-heme iron center and a stable tyrosyl radical essential for activity. A transfer pathway may occur between Tyr-125 of protein R2 and R1. Interacts with CSN7. Fe cation serves as cofactor. As to expression, expressed in rosette leaves, cauline leaves, stems and flowers.

The protein resides in the cytoplasm. The catalysed reaction is a 2'-deoxyribonucleoside 5'-diphosphate + [thioredoxin]-disulfide + H2O = a ribonucleoside 5'-diphosphate + [thioredoxin]-dithiol. With respect to regulation, inhibited by phenol, paracetamol, 2,4,6-trimethylphenol, resveratrol, furfuryl mercaptan, 2-thiophenthiol, phenylhydrazine, and hydroxyurea. Provides the precursors necessary for DNA synthesis. Catalyzes the biosynthesis of deoxyribonucleotides from the corresponding ribonucleotides. This is Ribonucleoside-diphosphate reductase small chain A (RNR2A) from Arabidopsis thaliana (Mouse-ear cress).